Here is a 231-residue protein sequence, read N- to C-terminus: Large ribosomal subunit protein uL1 (231 aa).

It belongs to the universal ribosomal protein uL1 family. In terms of assembly, part of the 50S ribosomal subunit.

In terms of biological role, binds directly to 23S rRNA. The L1 stalk is quite mobile in the ribosome, and is involved in E site tRNA release. Its function is as follows. Protein L1 is also a translational repressor protein, it controls the translation of the L11 operon by binding to its mRNA. The sequence is that of Large ribosomal subunit protein uL1 from Carboxydothermus hydrogenoformans (strain ATCC BAA-161 / DSM 6008 / Z-2901).